A 984-amino-acid chain; its full sequence is Calsyntenin-1 (984 aa).

The N-terminal stretch at methionine 1–alanine 18 is a signal peptide. The Extracellular segment spans residues lysine 19 to alanine 850. 2 consecutive Cadherin domains span residues tyrosine 66–isoleucine 142 and glutamate 143–valine 257. 2 N-linked (GlcNAc...) asparagine glycosylation sites follow: asparagine 206 and asparagine 305. A helical membrane pass occupies residues valine 851–leucine 871. Residues lysine 872–valine 984 are Cytoplasmic-facing. The segment at methionine 878–alanine 959 is disordered. A compositionally biased stretch (basic and acidic residues) spans arginine 886 to aspartate 896. Residues glutamate 918–threonine 951 show a composition bias toward acidic residues.

This sequence belongs to the calsyntenin family. In terms of assembly, interacts with isoform c of daf-2 (daf-2c); promoting daf-2c localization to synaptic regions. Interacts with klc-2. Interacts with unc-104. In terms of processing, a proportion of the protein is proteolytically cleaved before the transmembrane domain in neurons, leading to release in the extracellular space. Widely expressed in the nervous system. Highly expressed in many head neurons, including most amphid sensory neurons. Also expressed in other tissues, such as intestine and gonadal sheath cells.

The protein resides in the golgi apparatus membrane. The protein localises to the perikaryon. It localises to the cell projection. It is found in the axon. Its subcellular location is the secreted. The protein resides in the synaptic cleft. Functionally, cell adhesion molecule involved in associative learning and memory. Acts as a regulator of GABAergic synaptic transmission at neuromuscular junctions by regulating GABA synaptic vesicle precursor transport: possibly functions as a cargo adapter for unc-104-mediated transport of synaptic vesicle precursors. Promotes localization of isoform c of daf-2 (daf-2c) to synaptic regions by acting as a signaling adapter between klc-2 and daf-2c. Acts as aregulator of glutamate signaling in the sensory neurons by inhibiting the activity of command interneurons, thereby negatively regulating motor circuit activity and locomotion. This is Calsyntenin-1 from Caenorhabditis elegans.